Consider the following 166-residue polypeptide: Nucleotide-binding protein CV_2047 (166 aa).

Belongs to the YajQ family.

Nucleotide-binding protein. This Chromobacterium violaceum (strain ATCC 12472 / DSM 30191 / JCM 1249 / CCUG 213 / NBRC 12614 / NCIMB 9131 / NCTC 9757 / MK) protein is Nucleotide-binding protein CV_2047.